Reading from the N-terminus, the 875-residue chain is Importin subunit beta-1 (875 aa).

Met-1 bears the N-acetylmethionine mark. 5 HEAT repeats span residues 2–31 (ELIT…AAVE), 33–64 (LPTF…IRLL), 84–122 (ANAR…EIPV), 128–159 (LIPQ…ICQD), and 169–201 (SNEI…LNSL). Ser-12 carries the post-translational modification Phosphoserine. Residues 21-100 (AQKFLERAAV…KNYVLQTLGT (80 aa)) enclose the Importin N-terminal domain. Lys-210 bears the N6-acetyllysine mark. HEAT repeat units follow at residues 211-246 (ESER…IMSL), 252-301 (ETYM…EAAE), 313-359 (YAKG…TCCE), 363-393 (VPHV…GSIL), 401-437 (LKPL…ICEL), 448-484 (LAPL…YEAA), 499-536 (SSSF…EIVK), 543-591 (YPAV…QNVL), 599-638 (ALQI…VEVL), 643-680 (LKYM…CRAL), 685-723 (LPFC…TLAI), 731-775 (LEVV…VQGL), 785-828 (DVML…CTAF), and 830-872 (KDVL…RKLK). The interval 285–461 (VCDEEMDLAI…LQCLIEGLSA (177 aa)) is essential for high affinity interaction with RPL23A. An IAB-binding region spans residues 328-341 (TLTKQDENDDDDDW). Residues 333-418 (DENDDDDDWN…MPTLIELMKD (86 aa)) form a ran-GTP binding region. N6-acetyllysine occurs at positions 834 and 866.

The protein belongs to the importin beta family. Importin beta-1 subfamily. As to quaternary structure, forms a complex with an importin alpha subunit. Interacts with XPO1. Forms a heterodimer with IPO7. The KPNB1/IPO7 heterodimer interacts with H1 histone. Interacts with SNUPN. Interacts with H2A, H2B, H3 and H4 histones. Component of an import snRNP complex composed of KPNB1, SNUPN, SMN1 and ZNF259. Component of a nuclear export receptor complex composed of KPNB1, Ran, SNUPN and XPO1. Interacts with SRY. Interacts with PRKCI/atypical protein kinase C iota. Interacts with KPNA2. Interacts with KPNA7. Interacts with SNAI1 (via zinc fingers) and SNAI2 (via zinc fingers). Interacts with SLC35G1 and STIM1. Interacts with DCAF8. Interacts with RAN. Interacts with NUMA1 (via C-terminus); this interaction is inhibited by RanGTP. Interacts with ZBED1/hDREF; required for nuclear import of ZBED1/hDREF. Interacts with SRP19. Interacts with RPL23A (via BIB domain), RPS7 and RPL5. In terms of processing, mono-ADP-ribosylated by PARP16.

It is found in the cytoplasm. The protein localises to the nucleus envelope. In terms of biological role, functions in nuclear protein import, either in association with an adapter protein, like an importin-alpha subunit, which binds to nuclear localization signals (NLS) in cargo substrates, or by acting as autonomous nuclear transport receptor. Acting autonomously, serves itself as NLS receptor. Docking of the importin/substrate complex to the nuclear pore complex (NPC) is mediated by KPNB1 through binding to nucleoporin FxFG repeats and the complex is subsequently translocated through the pore by an energy requiring, Ran-dependent mechanism. At the nucleoplasmic side of the NPC, Ran binds to importin-beta and the three components separate and importin-alpha and -beta are re-exported from the nucleus to the cytoplasm where GTP hydrolysis releases Ran from importin. The directionality of nuclear import is thought to be conferred by an asymmetric distribution of the GTP- and GDP-bound forms of Ran between the cytoplasm and nucleus. Mediates autonomously the nuclear import of ribosomal proteins RPL23A, RPS7 and RPL5. In association with IPO7, mediates the nuclear import of H1 histone. In vitro, mediates nuclear import of H2A, H2B, H3 and H4 histones. Imports MRTFA, SNAI1 and PRKCI into the nucleus. This is Importin subunit beta-1 (Kpnb1) from Rattus norvegicus (Rat).